A 263-amino-acid polypeptide reads, in one-letter code: Lens fiber major intrinsic protein (263 aa).

Residues 1–9 are Cytoplasmic-facing; that stretch reads MWELRSASF. The chain crosses the membrane as a helical span at residues 10–29; it reads WRAIFAEFFATLFYVFFGLG. Residues 30-41 lie on the Extracellular side of the membrane; it reads ASLRWAPGPLHV. Residues 42–59 traverse the membrane as a helical segment; it reads LQVALAFGLALAXLVQTV. The Cytoplasmic portion of the chain corresponds to 60-61; it reads GH. The segment at residues 62 to 77 is an intramembrane region (discontinuously helical); the sequence is ISGAHVNPAVTFXFLV. The NPA 1 signature appears at 68 to 70; that stretch reads NPA. The Cytoplasmic segment spans residues 78 to 82; the sequence is GSQMS. The chain crosses the membrane as a helical span at residues 83 to 106; sequence LLRAFCYMAAQLLGAVAGAAVLYS. The Extracellular segment spans residues 107-127; that stretch reads VTPPAVRGNLALNTLHAGVSV. The chain crosses the membrane as a helical span at residues 128–148; the sequence is XQATTVEIFLTLQFVLCIFAT. At 149 to 156 the chain is on the cytoplasmic side; sequence YDERRNGR. A helical membrane pass occupies residues 157 to 175; it reads LGSVALAVGFSLTLGHLFG. Topologically, residues 176–178 are extracellular; the sequence is MYY. The discontinuously helical intramembrane region spans 179–193; that stretch reads TGAGMNPARSFAPAI. The NPA 2 signature appears at 184–186; the sequence is NPA. Topologically, residues 194 to 200 are extracellular; the sequence is LTRNFTN. The chain crosses the membrane as a helical span at residues 201 to 222; the sequence is HWVYWVGPIIGGGLGSLLYDFL. Topologically, residues 223 to 263 are cytoplasmic; the sequence is LFPRLKSVSERLSILKGTRPSDNNGQPEGTGEPVELKTQAL. Positions 227–237 are interaction with CALM; it reads LKSVSERLSIL. Phosphoserine is present on residues S235 and S243. A disordered region spans residues 238-263; it reads KGTRPSDNNGQPEGTGEPVELKTQAL. Deamidated asparagine; by deterioration occurs at positions 245 and 246.

The protein belongs to the MIP/aquaporin (TC 1.A.8) family. In terms of assembly, homotetramer; each monomer provides an independent water pore. Two homotetramers on opposing membranes can dimerize, forming a cell-cell junction. Interacts with CALM; the calcium-calmodulin/CALM complex interacts with the cytoplasmic domains of two aquaporins, leading to channel closure. Interacts with BFSP1 (via C-terminus); prevents calcium-dependent inhibition of the water channel activity. In terms of processing, subject to partial proteolytic cleavage in the eye lens core. Partial proteolysis promotes interactions between tetramers from adjoining membranes. Fatty acylated at Met-1 and Lys-238. The acyl modifications, in decreasing order of ion abundance, are: oleoyl (C18:1) &gt; palmitoyl (C16:0) &gt; stearoyl (C18:0) &gt; eicosenoyl (C20:1) &gt; dihomo-gamma-linolenoyl (C20:3) &gt; palmitoleoyl (C16:1) &gt; eicosadienoyl (C20:2). Detected in eye lens (at protein level).

The protein resides in the cell membrane. Its subcellular location is the cell junction. It carries out the reaction H2O(in) = H2O(out). The water channel activity is inhibited by calcium through calmodulin/CALM. Its function is as follows. Aquaporins form homotetrameric transmembrane channels, with each monomer independently mediating water transport across the plasma membrane along its osmotic gradient. Specifically expressed in lens fiber cells, this aquaporin is crucial for maintaining lens water homeostasis and transparency. Beyond water permeability, it also acts as a cell-to-cell adhesion molecule, forming thin junctions between lens fiber cells that are essential for maintaining the ordered structure and transparency of the lens. This is Lens fiber major intrinsic protein from Cavia porcellus (Guinea pig).